Consider the following 284-residue polypeptide: Acetyl-coenzyme A carboxylase carboxyl transferase subunit beta (284 aa).

The CoA carboxyltransferase N-terminal domain occupies 27–284 (LMTKCPSCKY…ELHDGGVRHV (258 aa)). Zn(2+) contacts are provided by Cys-31, Cys-34, Cys-50, and Cys-52. Residues 31–52 (CPSCKYMHYTKQLNENHKVCDC) form a C4-type zinc finger.

It belongs to the AccD/PCCB family. As to quaternary structure, acetyl-CoA carboxylase is a heterohexamer composed of biotin carboxyl carrier protein (AccB), biotin carboxylase (AccC) and two subunits each of ACCase subunit alpha (AccA) and ACCase subunit beta (AccD). It depends on Zn(2+) as a cofactor.

The protein resides in the cytoplasm. The catalysed reaction is N(6)-carboxybiotinyl-L-lysyl-[protein] + acetyl-CoA = N(6)-biotinyl-L-lysyl-[protein] + malonyl-CoA. It functions in the pathway lipid metabolism; malonyl-CoA biosynthesis; malonyl-CoA from acetyl-CoA: step 1/1. In terms of biological role, component of the acetyl coenzyme A carboxylase (ACC) complex. Biotin carboxylase (BC) catalyzes the carboxylation of biotin on its carrier protein (BCCP) and then the CO(2) group is transferred by the transcarboxylase to acetyl-CoA to form malonyl-CoA. The sequence is that of Acetyl-coenzyme A carboxylase carboxyl transferase subunit beta from Exiguobacterium sp. (strain ATCC BAA-1283 / AT1b).